A 232-amino-acid chain; its full sequence is Orotate phosphoribosyltransferase (232 aa).

5-phospho-alpha-D-ribose 1-diphosphate-binding positions include arginine 107, lysine 108, lysine 111, and 133 to 141 (EDLTTDGGS). Threonine 137 serves as a coordination point for orotate.

The protein belongs to the purine/pyrimidine phosphoribosyltransferase family. PyrE subfamily. In terms of assembly, homodimer. It depends on Mg(2+) as a cofactor.

It catalyses the reaction orotidine 5'-phosphate + diphosphate = orotate + 5-phospho-alpha-D-ribose 1-diphosphate. Its pathway is pyrimidine metabolism; UMP biosynthesis via de novo pathway; UMP from orotate: step 1/2. In terms of biological role, catalyzes the transfer of a ribosyl phosphate group from 5-phosphoribose 1-diphosphate to orotate, leading to the formation of orotidine monophosphate (OMP). The chain is Orotate phosphoribosyltransferase from Cereibacter sphaeroides (strain ATCC 17029 / ATH 2.4.9) (Rhodobacter sphaeroides).